The sequence spans 64 residues: Potassium channel toxin kappa-KTx 3.1 (64 aa).

The first 26 residues, 1–26 (MKSTLMTASVLILVLLSIVDYASVYA), serve as a signal peptide directing secretion. A propeptide spanning residues 27-36 (EFIDSEISLE) is cleaved from the precursor. Intrachain disulfides connect Cys-43-Cys-61 and Cys-47-Cys-57.

Belongs to the short scorpion toxin superfamily. Potassium channel inhibitor kappa-KTx family. Kappa-KTx 3 subfamily. Expressed by the venom gland.

The protein localises to the secreted. In terms of biological role, potassium channel inhibitor (Kv). The protein is Potassium channel toxin kappa-KTx 3.1 of Heterometrus petersii (Asian forest scorpion).